An 899-amino-acid polypeptide reads, in one-letter code: Inner tegument protein (899 aa).

An interaction with large tegument protein region spans residues 463-899; that stretch reads WNYTWLDATS…SAILDAELSK (437 aa).

The protein belongs to the herpesviridae inner tegument protein family. As to quaternary structure, interacts (via C-terminus) with the large tegument protein/LTP (via N-terminus).

It localises to the virion tegument. The protein localises to the host cytoplasm. The protein resides in the host nucleus. Its subcellular location is the host Golgi apparatus. It is found in the host trans-Golgi network. Its function is as follows. Plays an essential role in cytoplasmic secondary envelopment during viral egress. Interacts with the capsid via the large tegument protein/LTP and participates in its transport to the host trans-Golgi network (TGN) where secondary envelopment occurs. Modulates tegumentation and capsid accumulation at the viral assembly complex. The protein is Inner tegument protein (63) of Saimiri sciureus (Common squirrel monkey).